A 444-amino-acid chain; its full sequence is MDLPLSDEQIRELDESTLDYLLWRNKGIDITQLANSLQVDAPTLQEDTNRLPLLARKWTAIARLQRRIMSLEQNIRDLREASIEMNAPAFSPESSESARIAWIAPAQPRASITLESPVTGVRLHPELAVVFVSTEQGRLHCFDLMDITLPLASIQAHTRAITSVDVFCWQQTTYVVTGSKDMQVRVFTWSAGQGLKLLRSFAGHEHVVSGVRIWVGPRTTNIGGGSLLLASCSRDTSVKIWDVNSGWCLKSFQPHSDWVRCLDVYGEFLITGCQDSTLRLTHWPSGNGLSVGLGHDFPVESVRFIGSLQDAVTTEGRTNNWLGHCVSTSRDRTSKIWLLPQPRRLPQRPPVPHSTDAQFLCKWTLRGHDSWIKAVGSRGDHVFTASDDKSVICWNWTNGQCLKKWNRIHQGFVTCIDLDDSNHPLKRKIMVTGGIDCKCHIFMQ.

Residues 59 to 87 (TAIARLQRRIMSLEQNIRDLREASIEMNA) are a coiled coil. WD repeat units follow at residues 113 to 152 (TLES…LPLA), 156 to 199 (AHTR…KLLR), 204 to 251 (HEHV…CLKS), 254 to 293 (PHSD…SVGL), 307 to 347 (SLQD…RLPQ), 367 to 406 (GHDS…KKWN), and 408 to 444 (IHQG…IFMQ).

Belongs to the WD repeat LIS1/nudF family. In terms of assembly, self-associates. Interacts with NDL1 and dynein.

The protein localises to the cytoplasm. It is found in the cytoskeleton. Its subcellular location is the spindle pole. Its function is as follows. Positively regulates the activity of the minus-end directed microtubule motor protein dynein. Plays a central role in positioning the mitotic spindle at the bud neck during cell division. Targets cytoplasmic dynein to microtubule plus ends, thereby promoting dynein-mediated microtubule sliding along the bud cortex and consequently the movement of the mitotic spindle to the bud neck. In Zygosaccharomyces rouxii (strain ATCC 2623 / CBS 732 / NBRC 1130 / NCYC 568 / NRRL Y-229), this protein is Nuclear distribution protein PAC1.